The chain runs to 340 residues: Protein-arginine kinase (340 aa).

The 228-residue stretch at 14 to 241 (IVLSSRIRLA…YQIINQEKLA (228 aa)) folds into the Phosphagen kinase C-terminal domain. Residues 17–21 (SSRIR), R112, 163–167 (RASVM), and 194–199 (RGIYGE) contribute to the ATP site.

Belongs to the ATP:guanido phosphotransferase family.

The enzyme catalyses L-arginyl-[protein] + ATP = N(omega)-phospho-L-arginyl-[protein] + ADP + H(+). Its function is as follows. Catalyzes the specific phosphorylation of arginine residues in proteins. The protein is Protein-arginine kinase of Clostridium tetani (strain Massachusetts / E88).